We begin with the raw amino-acid sequence, 373 residues long: Cathecol O-methyltransferase 1 (373 aa).

S-adenosyl-L-homocysteine-binding residues include glycine 209, aspartate 232, aspartate 252, methionine 253, methionine 265, and lysine 266. Aspartate 232 is an S-adenosyl-L-methionine binding site. Histidine 279 functions as the Proton acceptor in the catalytic mechanism.

Belongs to the class I-like SAM-binding methyltransferase superfamily. Cation-independent O-methyltransferase family. COMT subfamily.

The enzyme catalyses catechol + S-adenosyl-L-methionine = guaiacol + S-adenosyl-L-homocysteine + H(+). O-methyltransferase that catalyzes the conversion of catechol to guaiacol. Involved in the production of guaiacol in fruits. The polypeptide is Cathecol O-methyltransferase 1 (Solanum lycopersicum (Tomato)).